The chain runs to 239 residues: Ribose-5-phosphate isomerase A (239 aa).

Residues 40–43, 96–99, and 110–113 each bind substrate; these read SGST, DGAD, and KGGG. Glu119 acts as the Proton acceptor in catalysis. Lys137 serves as a coordination point for substrate.

The protein belongs to the ribose 5-phosphate isomerase family. As to quaternary structure, homodimer.

It catalyses the reaction aldehydo-D-ribose 5-phosphate = D-ribulose 5-phosphate. The protein operates within carbohydrate degradation; pentose phosphate pathway; D-ribose 5-phosphate from D-ribulose 5-phosphate (non-oxidative stage): step 1/1. Functionally, catalyzes the reversible conversion of ribose-5-phosphate to ribulose 5-phosphate. This chain is Ribose-5-phosphate isomerase A, found in Methanococcus maripaludis (strain C6 / ATCC BAA-1332).